An 801-amino-acid chain; its full sequence is Protein ACCUMULATION AND REPLICATION OF CHLOROPLASTS 6, chloroplastic (801 aa).

A chloroplast-targeting transit peptide spans 1-67; it reads MEALSHVGIG…SSSFATATTT (67 aa). Over 68 to 618 the chain is Stromal; the sequence is ATLVSPPPSI…ADMLKEASVK (551 aa). The J domain occupies 89–153; that stretch reads DFYQVLGAQT…RSRREYNEGL (65 aa). The chain crosses the membrane as a helical span at residues 619-638; the sequence is ILAAGVAIGLISLFSQKYFL. Over 639–801 the chain is Chloroplast intermembrane; the sequence is KSSSSFQRKD…KITEGSVLAS (163 aa). Residues 639–801 are interaction with PDV2; it reads KSSSSFQRKD…KITEGSVLAS (163 aa).

As to quaternary structure, self-interacts. Part of a complex made of ARC3, ARC6, FTSZ1 and FTSZ2. Interacts with FTSZ2-1 and FTSZ2-2 (via C-terminus), but not with FTSZ1; this interaction enables ARC3 binding to FTSZ2. Binds to CDT1A. Interacts (via C-terminus) with PDV2 (via C-terminus) in the chloroplast intermembrane space; this interaction induces homodimerization and leads to the formation of a heterotetramer containing two ARC6 and two PDV2 subunits. Interacts with MCD1 in the chloroplast stroma and facilitates its subsequent binding to FtsZ2-1. Interacts (via J domain) with CJD1 (via J-like domain). As to expression, mostly expressed in young leaves.

It localises to the plastid. The protein resides in the chloroplast inner membrane. In terms of biological role, component of the plastid division machinery consisting in a binary fission accomplished by the simultaneous constriction of the FtsZ ring on the stromal side of the inner envelope membrane, and the ARC5 ring on the cytosolic side of the outer envelope membrane. Involved in the initiation of proplastid and plastid division (including chloroplasts, statoliths and leukoplasts). Promotes the assembly and/or stabilization of the plastid-dividing FtsZ ring, functioning as an antagonistic regulator of FtsZ dynamics against CDP1 and facilitating MCD1 positioning to membrane tethered FtsZ filaments to form the chloroplast Z-Ring; inhibits GDP-induced disassembly of FTSZ2 but enables ARC3 binding to FTSZ2-1. Relays plastid division site position between stroma and outer surface via interactions with the stromal FtsZ ring and the outer membrane PDV2 that recruits cytoplasmic ARC5 ring. Required for plastid equatorial positioning of PDV2 and ARC5. May contribute to gravitropism in stems and hypocotyls. Seems to influence stromule (stroma-filled tubular extensions of the plastid envelope membrane) length and frequency. The polypeptide is Protein ACCUMULATION AND REPLICATION OF CHLOROPLASTS 6, chloroplastic (Arabidopsis thaliana (Mouse-ear cress)).